Reading from the N-terminus, the 84-residue chain is Small ribosomal subunit protein eS27-like (84 aa).

The span at methionine 1 to lysine 16 shows a compositional bias: basic and acidic residues. Positions methionine 1–arginine 23 are disordered. The C4-type zinc-finger motif lies at proline 38–serine 60.

This sequence belongs to the eukaryotic ribosomal protein eS27 family. The cofactor is Zn(2+).

The polypeptide is Small ribosomal subunit protein eS27-like (RPS27L) (Bos taurus (Bovine)).